Reading from the N-terminus, the 351-residue chain is High-affinity nickel transport protein (351 aa).

At 1-19 the chain is on the cytoplasmic side; that stretch reads MFQLLAGVRMNSTGRPRAK. Residues 20-40 form a helical membrane-spanning segment; that stretch reads IILLYALLIAFNIGAWLCALA. Topologically, residues 41-51 are periplasmic; that stretch reads AFRDHPVLLGT. A helical transmembrane segment spans residues 52-72; that stretch reads ALLAYGLGLRHAVDADHLAAI. Over 73–94 the chain is Cytoplasmic; the sequence is DNVTRKLMQDGRRPITAGLWFS. The chain crosses the membrane as a helical span at residues 95 to 115; it reads LGHSSVVVLASVLIAVMATTL. The Periplasmic portion of the chain corresponds to 116-128; sequence QERLDAFHEVGSV. Residues 129 to 149 traverse the membrane as a helical segment; the sequence is IGTLASALFLFAIAAINLVIL. At 150 to 199 the chain is on the cytoplasmic side; sequence RSAYRAFRRVRRGGIYVEEDFDLLFGNRGFLARIFRPLFRFITRSWHMYP. Residues 200-220 traverse the membrane as a helical segment; the sequence is LGMLFALGFDTATEVALLGIS. At 221 to 243 the chain is on the periplasmic side; the sequence is TMEASRGVPIWSILVFPALFTAG. A helical membrane pass occupies residues 244–264; sequence MALIDTIDSILMCGAYAWAYA. Topologically, residues 265 to 269 are cytoplasmic; sequence KPVRK. The helical transmembrane segment at 270–290 threads the bilayer; the sequence is LYYNMTITFVSAIVALIVGGI. Residues 291 to 316 are Periplasmic-facing; that stretch reads ETLGLLADKFMLKGVFWNAVGALNEN. The chain crosses the membrane as a helical span at residues 317 to 337; the sequence is FCQLGFVIIGIFTVCWVVSIV. Over 338–351 the chain is Cytoplasmic; sequence VYRLRRYDDSEVRA.

Belongs to the NiCoT transporter (TC 2.A.52) family.

It is found in the cell inner membrane. High-affinity nickel transporter responsible for nickel uptake. Necessary for high levels of activity of hydrogenase and urease. Does not transport cobalt. The chain is High-affinity nickel transport protein (hoxN) from Cupriavidus necator (strain ATCC 17699 / DSM 428 / KCTC 22496 / NCIMB 10442 / H16 / Stanier 337) (Ralstonia eutropha).